The primary structure comprises 490 residues: Betaine aldehyde dehydrogenase (490 aa).

The K(+) site is built by T26, I27, and D93. Residue 150–152 (GAW) participates in NAD(+) binding. K162 acts as the Charge relay system in catalysis. 176 to 179 (KPSE) contributes to the NAD(+) binding site. V180 provides a ligand contact to K(+). Residue 230-233 (GVAS) coordinates NAD(+). A K(+)-binding site is contributed by L246. The Proton acceptor role is filled by E252. 3 residues coordinate NAD(+): G254, C286, and E387. C286 (nucleophile) is an active-site residue. Cysteine sulfenic acid (-SOH) is present on C286. Residues K457 and G460 each coordinate K(+). The Charge relay system role is filled by E464.

The protein belongs to the aldehyde dehydrogenase family. In terms of assembly, dimer of dimers. The cofactor is K(+).

It carries out the reaction betaine aldehyde + NAD(+) + H2O = glycine betaine + NADH + 2 H(+). It participates in amine and polyamine biosynthesis; betaine biosynthesis via choline pathway; betaine from betaine aldehyde: step 1/1. Involved in the biosynthesis of the osmoprotectant glycine betaine. Catalyzes the irreversible oxidation of betaine aldehyde to the corresponding acid. This Escherichia coli O45:K1 (strain S88 / ExPEC) protein is Betaine aldehyde dehydrogenase.